The sequence spans 525 residues: uncharacterized protein (525 aa).

An N-terminal signal peptide occupies residues 1-21; that stretch reads MLECLSALLVLFAGGGGSVLA. Residues 22-448 lie on the Extracellular side of the membrane; the sequence is AVQSKTVADP…ISAASQLDKR (427 aa). A disordered region spans residues 242-264; sequence KVSSENCSKDTDDKSGSKKERNT. A helical membrane pass occupies residues 449–469; that stretch reads IFIFTAITVSITTLMMLGFSY. Residues 470-525 lie on the Cytoplasmic side of the membrane; sequence RSRVSFRDHSIDDSDDDNDWSDDEVEFDEEYFYSLPVSIPEKGISLDKMAQQLGVE.

It localises to the membrane. This is an uncharacterized protein from Saccharomyces cerevisiae (strain ATCC 204508 / S288c) (Baker's yeast).